Reading from the N-terminus, the 307-residue chain is Transposase InsD for insertion element IS2-9 (307 aa).

The region spanning 112-295 (KPAVPPSKRA…SPREYLRQRA (184 aa)) is the Integrase catalytic domain.

In terms of biological role, involved in the transposition of the insertion sequence IS2. This is Transposase InsD for insertion element IS2-9 from Escherichia coli (strain K12).